The primary structure comprises 299 residues: Heterodisulfide reductase subunit B-like protein (299 aa).

It belongs to the HdrB family. In terms of assembly, the heterodisulfide reductase is composed of three subunits; HdlA, HdlB and HdlC. It forms a complex with the F420-non-reducing hydrogenase (Mvh), which provides the reducing equivalents to the heterodisulfide reductase.

The protein resides in the cytoplasm. Its function is as follows. Has oxidoreductase activity. The Hdl and Mvh subunits may together mediate electron transfer from hydrogen to an unidentified electron acceptor on the cytoplasmic side of the membrane. In Archaeoglobus profundus (strain DSM 5631 / JCM 9629 / NBRC 100127 / Av18), this protein is Heterodisulfide reductase subunit B-like protein (hdlB).